The following is a 98-amino-acid chain: MPVIYINLIAAFFMAFMGLLIYRSHLMSSLLCLEGMMLSLFILNSTLALSMHFTLYSMMPIILLVFAACEAALGLSLLVMVSNTYGLDYVQNLNLLQC.

Helical transmembrane passes span 1-21, 29-49, and 61-81; these read MPVI…GLLI, SLLC…TLAL, and IILL…LVMV.

Belongs to the complex I subunit 4L family. In terms of assembly, core subunit of respiratory chain NADH dehydrogenase (Complex I) which is composed of 45 different subunits.

The protein localises to the mitochondrion inner membrane. It catalyses the reaction a ubiquinone + NADH + 5 H(+)(in) = a ubiquinol + NAD(+) + 4 H(+)(out). Core subunit of the mitochondrial membrane respiratory chain NADH dehydrogenase (Complex I) which catalyzes electron transfer from NADH through the respiratory chain, using ubiquinone as an electron acceptor. Part of the enzyme membrane arm which is embedded in the lipid bilayer and involved in proton translocation. The chain is NADH-ubiquinone oxidoreductase chain 4L (MT-ND4L) from Echinops telfairi (Lesser hedgehog tenrec).